A 253-amino-acid polypeptide reads, in one-letter code: HTH-type transcriptional regulator YdeO (253 aa).

The HTH araC/xylS-type domain occupies Gly137 to Glu233. 2 consecutive DNA-binding regions (H-T-H motif) follow at residues Lys154–Gln175 and Val200–Phe223.

In terms of biological role, induces the expression of gadE and mdtEF. Could also regulate the expression of other genes involved in acid resistance. The polypeptide is HTH-type transcriptional regulator YdeO (ydeO) (Escherichia coli (strain K12)).